A 720-amino-acid chain; its full sequence is DNA replication licensing factor mcm7-A (720 aa).

The C4-type zinc finger occupies C183 to C210. The 207-residue stretch at F331–T537 folds into the MCM domain. The ATP site is built by Y344, G383, A385, K386, S387, N488, R513, and R603. Positions S512–D515 match the Arginine finger motif.

The protein belongs to the MCM family. In terms of assembly, component of the mcm2-7 complex (RLF-M). The complex forms a toroidal hexameric ring with the proposed subunit order mcm2-mcm6-mcm4-mcm7-mcm3-mcm5. The heterodimer of mmcm3/mcm5 interacts with mcm4, mmcm6, mcm7 and weakly with mcm2. The N-terminus is required for interaction with mmcm3, though this interaction may not be direct, and remains in a complex with mmcm3 throughout the cell cycle. Begins to associate with zmcm6 at the neurula stage. Component of the replisome complex. Component of the CMG helicase complex, composed of the mcm2-7 complex, the GINS complex and cdc45. Ubiquitinated by traip when forks converge following formation of DNA interstrand cross-links. Ubiquitinated via 'Lys-6'- and 'Lys-63'-linked polyubiquitination by traip. Short ubiquitin chains on mcm7 promote recruitment of DNA glycosylase neil3. If the interstrand cross-link cannot be cleaved by neil3, the ubiquitin chains continue to grow on mcm7, promoting the unloading of the CMG helicase complex by the vcp/p97 ATPase.

The protein localises to the nucleus. It is found in the chromosome. It catalyses the reaction ATP + H2O = ADP + phosphate + H(+). Acts as a component of the mcm2-7 complex (mcm complex) which is the putative replicative helicase essential for 'once per cell cycle' DNA replication initiation and elongation in eukaryotic cells. The active ATPase sites in the mcm2-7 ring are formed through the interaction surfaces of two neighboring subunits such that a critical structure of a conserved arginine finger motif is provided in trans relative to the ATP-binding site of the Walker A box of the adjacent subunit. The six ATPase active sites, however, are likely to contribute differentially to the complex helicase activity. The existence of maternal and zygotic forms of mcm3 and mcm6 suggests that specific forms of mcm2-7 complexes may be used during different stages of development. In Xenopus laevis (African clawed frog), this protein is DNA replication licensing factor mcm7-A (mcm7-a).